Consider the following 370-residue polypeptide: 1-propanol dehydrogenase PduQ (370 aa).

It belongs to the iron-containing alcohol dehydrogenase family. As to quaternary structure, interacts with PduP, probably via the N-terminus of PduQ. The cofactor is Fe cation.

The protein localises to the bacterial microcompartment. The enzyme catalyses 1-propanol + NAD(+) = propanal + NADH + H(+). It functions in the pathway polyol metabolism; 1,2-propanediol degradation. Enzyme is oxygen sensitive. In terms of biological role, an iron-dependent alcohol dehydrogenase required for optimal 1,2-propanediol (1,2-PD) degradation. NAD(+) and NADH are regenerated internally within the bacterial microcompartment (BMC) dedicated to 1,2-PD degradation by the PduP and PduQ enzymes, which reduce NAD(+) and oxidize NADH respectively, although there must also be cofactor transport across the BMC. Its function is as follows. The 1,2-PD-specific bacterial microcompartment (BMC) concentrates low levels of 1,2-PD catabolic enzymes, concentrates volatile reaction intermediates thus enhancing pathway flux and keeps the level of toxic, mutagenic propionaldehyde low. In Salmonella typhimurium (strain LT2 / SGSC1412 / ATCC 700720), this protein is 1-propanol dehydrogenase PduQ.